Here is a 117-residue protein sequence, read N- to C-terminus: uncharacterized protein (117 aa).

A helical membrane pass occupies residues 10 to 32 (VCYLGDIAASGFLNSIATALIAV).

It localises to the membrane. This is an uncharacterized protein from Rickettsia conorii (strain ATCC VR-613 / Malish 7).